Reading from the N-terminus, the 377-residue chain is MKFEKLGQSGRARRGRLTLEHGVVETPVFMPVGTYGTVKGMLPRDIEDIQAQIILGNTFHLYLRPGLEVIKQHGGLHDFIKWNKPILTDSGGFQVFSLGAMRKIKEEGVTFRSPIDGSKVFLSPEISMEIQHVLNSDIVMIFDECTPYPATHEEAQKSLQLSLRWAKRCKAHHHDELKNKNALFGIIQGGMYEDLRDESLNGLLEIGFDGYAIGGLSVGEPKEEMIKVLDYLPNKMPHDKPRYLMGVGKPEDIVEAVRRGVDMFDCVMPTRNARNGHYFVTDGLVRIRNSKYRHDQGPLDPHCDCYTCKNFTRAYLFHLEKCGEMLASMLGTIHNLRYYQRLTEGMRDALDNGTFDEFVQDFYARRGLEVPPCPVDE.

Aspartate 89 acts as the Proton acceptor in catalysis. Substrate is bound by residues 89 to 93 (DSGGF), aspartate 143, glutamine 188, and glycine 215. The tract at residues 246–252 (GVGKPED) is RNA binding. The active-site Nucleophile is the aspartate 265. The interval 270–274 (TRNAR) is RNA binding; important for wobble base 34 recognition. Positions 303, 305, 308, and 334 each coordinate Zn(2+).

This sequence belongs to the queuine tRNA-ribosyltransferase family. As to quaternary structure, homodimer. Within each dimer, one monomer is responsible for RNA recognition and catalysis, while the other monomer binds to the replacement base PreQ1. The cofactor is Zn(2+).

The catalysed reaction is 7-aminomethyl-7-carbaguanine + guanosine(34) in tRNA = 7-aminomethyl-7-carbaguanosine(34) in tRNA + guanine. The protein operates within tRNA modification; tRNA-queuosine biosynthesis. Its function is as follows. Catalyzes the base-exchange of a guanine (G) residue with the queuine precursor 7-aminomethyl-7-deazaguanine (PreQ1) at position 34 (anticodon wobble position) in tRNAs with GU(N) anticodons (tRNA-Asp, -Asn, -His and -Tyr). Catalysis occurs through a double-displacement mechanism. The nucleophile active site attacks the C1' of nucleotide 34 to detach the guanine base from the RNA, forming a covalent enzyme-RNA intermediate. The proton acceptor active site deprotonates the incoming PreQ1, allowing a nucleophilic attack on the C1' of the ribose to form the product. After dissociation, two additional enzymatic reactions on the tRNA convert PreQ1 to queuine (Q), resulting in the hypermodified nucleoside queuosine (7-(((4,5-cis-dihydroxy-2-cyclopenten-1-yl)amino)methyl)-7-deazaguanosine). In Acinetobacter baumannii (strain AB307-0294), this protein is Queuine tRNA-ribosyltransferase.